A 615-amino-acid polypeptide reads, in one-letter code: MMDGFAQDWPTLTHTDNGLAMDQLGGDLPLDVGFEPQTRARSNTWPCPRPENFVEPTDELDSTKASNQQLAPGDSQQAIQNANAAKKNSSRRNAWGNLSYADLITHAIGSATDKRLTLSQIYEWMVQNVPYFKDKGDSNSSAGWKNSIRHNLSLHNRFMRVQNEGTGKSSWWMLNPEAKPGKSVRRRAASMETSRYEKRRGRAKKRVEALRQAGVVGLNDATPSPSSSVSEGLDHFPESPLHSGGGFQLSPDFRQRASSNASSCGRLSPIRAQDLEPDWGFPVDYQNTTMTQAHAQALDELTGTMADELTLCPQQQGFSAASGLPSQPPPPPYQPPQHQQAQQQQQQSPYALNGPAPGYNTLQPQSQCLLHRSLNCSCMHNARDGLSPNSVTTTMSPAYPNSEPSSDSLNTYSNVVLDGPADTAALMVQQQQQQQQMSASLEGQCLEVLNNEAQPIDEFNLENFPVGNLECNVEELLQQEMSYGGLLDINIPLATVNTNLVNSSSGPLSISNISNLSNLSNISNISNISSNSGSSLSLNQLQAQLQQQQQQQAQQQQAQQQQQAHQQHQQQLLLNNNNNSSSSLELATQTASANLNARVQYSQPSVVTSPPSWVH.

Disordered stretches follow at residues Arg-39 to Gln-77, Lys-182 to Lys-205, Gly-217 to Pro-269, Phe-318 to Tyr-359, and Asn-389 to Leu-409. Residue Thr-44 is modified to Phosphothreonine; by PKB/AKT1. Residues Thr-63–Gln-77 show a composition bias toward polar residues. The residue at position 75 (Ser-75) is a Phosphoserine. The segment at residues Trp-95–Gly-201 is a DNA-binding region (fork-head). At Ser-190 the chain carries Phosphoserine; by PKB/AKT1. 2 stretches are compositionally biased toward polar residues: residues Ala-221–Ser-230 and Arg-256–Gly-265. Ser-259 carries the post-translational modification Phosphoserine; by PKB/AKT1. Phosphoserine occurs at positions 262, 263, and 268. The segment covering Ser-326–Pro-335 has biased composition (pro residues). A compositionally biased stretch (low complexity) spans Pro-336–Ala-351.

As to quaternary structure, interacts with melt.

The protein localises to the cytoplasm. The protein resides in the nucleus. In terms of biological role, transcription factor involved in the regulation of the insulin signaling pathway. Consistently activates both the downstream target Thor\d4EBP and the feedback control target InR. Involved in negative regulation of the cell cycle, modulating cell growth and proliferation. In response to cellular stresses, such as nutrient deprivation or increased levels of reactive oxygen species, foxo is activated and inhibits growth through the action of target genes such as Thor. Foxo activated in the adult fat body can regulate lifespan in adults; an insulin peptide itself may function as one secondary messenger of insulin-regulated aging. Also regulates Lip4, homolog of human acid lipases, thereby acting as a key modulator of lipid metabolism by insulin signaling and integrates insulin responses to glucose and lipid homeostasis. The polypeptide is Forkhead box protein O (Drosophila erecta (Fruit fly)).